We begin with the raw amino-acid sequence, 367 residues long: Germination protease (367 aa).

Residues 1–15 constitute a propeptide that is removed on maturation; sequence MKEPLDLSKYSVRTD.

The protein belongs to the peptidase A25 family. In terms of assembly, homotetramer. Post-translationally, autoproteolytically processed. The inactive tetrameric zymogen termed p46 autoprocesses to a smaller form termed p41, which is active only during spore germination.

It catalyses the reaction Endopeptidase action with P4 Glu or Asp, P1 preferably Glu &gt; Asp, P1' hydrophobic and P2' Ala.. Its function is as follows. Initiates the rapid degradation of small, acid-soluble proteins during spore germination. In Bacillus thuringiensis subsp. konkukian (strain 97-27), this protein is Germination protease.